Here is a 465-residue protein sequence, read N- to C-terminus: Box C/D snoRNA protein 1 (465 aa).

Positions 1 to 72 are disordered; the sequence is MEFAAENEGK…GSRQRPEEIP (72 aa). At S25 the chain carries Phosphoserine. Over residues 56–70 the composition is skewed to basic and acidic residues; that stretch reads EIGDGEEGSRQRPEE. Glycyl lysine isopeptide (Lys-Gly) (interchain with G-Cter in SUMO2) cross-links involve residues K79, K108, K118, K138, K148, K157, K168, K178, and K195. Zn(2+) is bound by residues C215, C218, C227, C230, C235, C239, H243, and C249. An HIT-type zinc finger spans residues 215–249; sequence CETCGTEEAKYRCPRCMRYSCSLPCVKKHKAELTC. Residue K454 forms a Glycyl lysine isopeptide (Lys-Gly) (interchain with G-Cter in SUMO2) linkage.

This sequence belongs to the BCD1 family. As to quaternary structure, interacts with FBL, SNU13, NOP58, NUFIP1, RUVBL1, RUVBL2 and TAF9. Interacts (via HIT-type zinc finger) with the RUVBL1/RUVBL2 complex in the presence of ADP.

Its function is as follows. Required for box C/D snoRNAs accumulation involved in snoRNA processing, snoRNA transport to the nucleolus and ribosome biogenesis. The sequence is that of Box C/D snoRNA protein 1 (ZNHIT6) from Pongo abelii (Sumatran orangutan).